The chain runs to 467 residues: Methionine aminopeptidase 2-1 (467 aa).

The segment covering 1-10 (MGSKSPDGHR) has biased composition (basic and acidic residues). Residues 1–105 (MGSKSPDGHR…TPPRVSLPSI (105 aa)) form a disordered region. The span at 43-55 (DGDDEDEDGDDDG) shows a compositional bias: acidic residues. A compositionally biased stretch (basic residues) spans 75–90 (KKRKRKSNKKKKKKTS). H219 is a substrate binding site. 3 residues coordinate a divalent metal cation: D240, D251, and H320. Residue H328 coordinates substrate. The a divalent metal cation site is built by E353 and E448.

The protein belongs to the peptidase M24A family. Methionine aminopeptidase eukaryotic type 2 subfamily. Requires Co(2+) as cofactor. Zn(2+) is required as a cofactor. The cofactor is Mn(2+). Fe(2+) serves as cofactor.

It is found in the cytoplasm. It catalyses the reaction Release of N-terminal amino acids, preferentially methionine, from peptides and arylamides.. In terms of biological role, cotranslationally removes the N-terminal methionine from nascent proteins. The N-terminal methionine is often cleaved when the second residue in the primary sequence is small and uncharged (Met-Ala-, Cys, Gly, Pro, Ser, Thr, or Val). In Arthroderma gypseum (strain ATCC MYA-4604 / CBS 118893) (Microsporum gypseum), this protein is Methionine aminopeptidase 2-1.